A 561-amino-acid chain; its full sequence is Laccase-1 (561 aa).

Positions 1-20 (MKNSFFSSLAKFASLSLAFA) are cleaved as a signal peptide. 2 consecutive Plastocyanin-like domains span residues 68–185 (VVQN…GPAT) and 191–337 (DLGM…YTGS). 3 N-linked (GlcNAc...) asparagine glycosylation sites follow: N71, N87, and N114. Residues H119, H121, H163, and H165 each contribute to the Cu cation site. Residues C140 and C542 are joined by a disulfide bond. N226, N284, N327, N391, and N398 each carry an N-linked (GlcNAc...) asparagine glycan. The Plastocyanin-like 3 domain maps to 396 to 525 (LLNWTDPTLL…ALQFVESESS (130 aa)). Residues H445, H448, H450, H504, C505, H506, and H510 each coordinate Cu cation.

This sequence belongs to the multicopper oxidase family. The cofactor is Cu cation.

The protein resides in the secreted. It catalyses the reaction 4 hydroquinone + O2 = 4 benzosemiquinone + 2 H2O. Its function is as follows. Lignin degradation and detoxification of lignin-derived products. The chain is Laccase-1 (lcc1) from Botryotinia fuckeliana (Noble rot fungus).